The sequence spans 416 residues: Serine hydroxymethyltransferase (416 aa).

(6S)-5,6,7,8-tetrahydrofolate contacts are provided by residues Leu121 and 125-127 (GHL). An N6-(pyridoxal phosphate)lysine modification is found at Lys229.

It belongs to the SHMT family. Homodimer. Pyridoxal 5'-phosphate serves as cofactor.

It is found in the cytoplasm. The enzyme catalyses (6R)-5,10-methylene-5,6,7,8-tetrahydrofolate + glycine + H2O = (6S)-5,6,7,8-tetrahydrofolate + L-serine. Its pathway is one-carbon metabolism; tetrahydrofolate interconversion. It participates in amino-acid biosynthesis; glycine biosynthesis; glycine from L-serine: step 1/1. In terms of biological role, catalyzes the reversible interconversion of serine and glycine with tetrahydrofolate (THF) serving as the one-carbon carrier. This reaction serves as the major source of one-carbon groups required for the biosynthesis of purines, thymidylate, methionine, and other important biomolecules. Also exhibits THF-independent aldolase activity toward beta-hydroxyamino acids, producing glycine and aldehydes, via a retro-aldol mechanism. The sequence is that of Serine hydroxymethyltransferase from Bordetella avium (strain 197N).